The chain runs to 276 residues: Rhomboid protease GlpG (276 aa).

The next 6 membrane-spanning stretches (helical) occupy residues 94-114 (GPVT…MSLI), 142-162 (IFMH…WYLG), 169-189 (LGSG…GYVQ), 192-212 (FSGP…GYVW), 229-249 (LIIF…GMSM), and 250-270 (ANGA…VDTL). Catalysis depends on serine 201, which acts as the Nucleophile. Histidine 254 is a catalytic residue.

This sequence belongs to the peptidase S54 family.

The protein localises to the cell inner membrane. It catalyses the reaction Cleaves type-1 transmembrane domains using a catalytic dyad composed of serine and histidine that are contributed by different transmembrane domains.. In terms of biological role, rhomboid-type serine protease that catalyzes intramembrane proteolysis. This chain is Rhomboid protease GlpG, found in Salmonella paratyphi A (strain ATCC 9150 / SARB42).